Reading from the N-terminus, the 152-residue chain is Xanthine-guanine phosphoribosyltransferase (152 aa).

5-phospho-alpha-D-ribose 1-diphosphate is bound by residues 37–38, Arg-69, and 88–96; these read RG and DDLVDTGGT. Residue Arg-69 participates in GMP binding. Residue Asp-89 participates in Mg(2+) binding. Guanine contacts are provided by Asp-92 and Ile-135. The xanthine site is built by Asp-92 and Ile-135. Residues 92-96 and 134-135 each bind GMP; these read DTGGT and WI.

This sequence belongs to the purine/pyrimidine phosphoribosyltransferase family. XGPT subfamily. Homotetramer. The cofactor is Mg(2+).

The protein resides in the cell inner membrane. It carries out the reaction GMP + diphosphate = guanine + 5-phospho-alpha-D-ribose 1-diphosphate. The enzyme catalyses XMP + diphosphate = xanthine + 5-phospho-alpha-D-ribose 1-diphosphate. The catalysed reaction is IMP + diphosphate = hypoxanthine + 5-phospho-alpha-D-ribose 1-diphosphate. Its pathway is purine metabolism; GMP biosynthesis via salvage pathway; GMP from guanine: step 1/1. It functions in the pathway purine metabolism; XMP biosynthesis via salvage pathway; XMP from xanthine: step 1/1. Functionally, purine salvage pathway enzyme that catalyzes the transfer of the ribosyl-5-phosphate group from 5-phospho-alpha-D-ribose 1-diphosphate (PRPP) to the N9 position of the 6-oxopurines guanine and xanthine to form the corresponding ribonucleotides GMP (guanosine 5'-monophosphate) and XMP (xanthosine 5'-monophosphate), with the release of PPi. To a lesser extent, also acts on hypoxanthine. The sequence is that of Xanthine-guanine phosphoribosyltransferase from Escherichia fergusonii (strain ATCC 35469 / DSM 13698 / CCUG 18766 / IAM 14443 / JCM 21226 / LMG 7866 / NBRC 102419 / NCTC 12128 / CDC 0568-73).